Here is a 556-residue protein sequence, read N- to C-terminus: Sensory neuron membrane protein 2 (556 aa).

The Cytoplasmic segment spans residues 1 to 6 (MIHWSL). The helical transmembrane segment at 7–27 (IVSALGVCVAVLGGYCGWILF) threads the bilayer. The Extracellular segment spans residues 28-522 (PNMVHKKVEQ…KLINTLKTLN (495 aa)). N-linked (GlcNAc...) asparagine glycans are attached at residues Asn-66, Asn-274, Asn-310, and Asn-324. Intrachain disulfides connect Cys-320/Cys-388 and Cys-349/Cys-415. A helical transmembrane segment spans residues 523–543 (IVHWATLCGGIGVAVACLIYY). The Cytoplasmic portion of the chain corresponds to 544–556 (IYQRGRVVEPPVK).

Belongs to the CD36 family. In terms of tissue distribution, detected in the head and to a lesser extent in legs and wings.

Its subcellular location is the cell membrane. Plays an olfactory role that is not restricted to pheromone sensitivity. The sequence is that of Sensory neuron membrane protein 2 from Drosophila melanogaster (Fruit fly).